Reading from the N-terminus, the 174-residue chain is CASP-like protein 4D2 (174 aa).

The Cytoplasmic portion of the chain corresponds to 1-14; sequence MAPPPPSPPPVSLK. Residues 15 to 35 form a helical membrane-spanning segment; it reads VSLLLLRVLTGVFLVIALIIL. Residues 36-60 lie on the Extracellular side of the membrane; that stretch reads STNSVTIVSQGSALKFHFKDVYAYR. The chain crosses the membrane as a helical span at residues 61 to 81; it reads YMLSAAVIGLLYAVIQLFFTI. Over 82–150 the chain is Cytoplasmic; sequence SEFATGMKNP…FFSRGYASAS (69 aa). The helical transmembrane segment at 151 to 171 threads the bilayer; that stretch reads LLLFSFICLAVLSVFSSLAIA. Residues 172-174 are Extracellular-facing; that stretch reads KRN.

Belongs to the Casparian strip membrane proteins (CASP) family. Homodimer and heterodimers.

The protein localises to the cell membrane. The sequence is that of CASP-like protein 4D2 from Arabidopsis lyrata subsp. lyrata (Lyre-leaved rock-cress).